A 300-amino-acid polypeptide reads, in one-letter code: Porphobilinogen deaminase (300 aa).

At Cys-239 the chain carries S-(dipyrrolylmethanemethyl)cysteine.

It belongs to the HMBS family. Monomer. It depends on dipyrromethane as a cofactor.

It catalyses the reaction 4 porphobilinogen + H2O = hydroxymethylbilane + 4 NH4(+). It participates in porphyrin-containing compound metabolism; protoporphyrin-IX biosynthesis; coproporphyrinogen-III from 5-aminolevulinate: step 2/4. Functionally, tetrapolymerization of the monopyrrole PBG into the hydroxymethylbilane pre-uroporphyrinogen in several discrete steps. The chain is Porphobilinogen deaminase from Francisella tularensis subsp. novicida (strain U112).